The chain runs to 354 residues: Guanine nucleotide-binding protein G(t) subunit alpha-2 (354 aa).

The segment at 1–28 (MGSGISAEDKELARRSKELEKKLQEDAD) is disordered. Gly-2 carries the N-myristoyl glycine lipid modification. Over residues 7 to 28 (AEDKELARRSKELEKKLQEDAD) the composition is skewed to basic and acidic residues. The G-alpha domain maps to 32–354 (KTVKLLLLGA…KENLKDCGLF (323 aa)). A G1 motif region spans residues 35–48 (KLLLLGAGESGKST). GTP contacts are provided by residues 40–47 (GAGESGKS), 175–181 (LRSRVKT), 200–204 (DVGGQ), 269–272 (NKKD), and Ala-326. The Mg(2+) site is built by Ser-47 and Thr-181. Residues 173–181 (DVLRSRVKT) are G2 motif. The G3 motif stretch occupies residues 196-205 (FRMFDVGGQR). The G4 motif stretch occupies residues 265–272 (VLFLNKKD). The tract at residues 324 to 329 (TCATDT) is G5 motif.

The protein belongs to the G-alpha family. G(i/o/t/z) subfamily. G proteins are composed of 3 units; alpha, beta and gamma. The alpha chain contains the guanine nucleotide binding site. As to expression, in the retina, expressed in the rod photoreceptors.

It localises to the cell projection. The protein resides in the cilium. The protein localises to the photoreceptor outer segment. Its subcellular location is the photoreceptor inner segment. In terms of biological role, guanine nucleotide-binding proteins (G proteins) are involved as modulators or transducers in various transmembrane signaling systems. Transducin is an amplifier and one of the transducers of a visual impulse that performs the coupling between rhodopsin and cGMP-phosphodiesterase. This chain is Guanine nucleotide-binding protein G(t) subunit alpha-2 (Gnat2), found in Mus musculus (Mouse).